We begin with the raw amino-acid sequence, 233 residues long: tRNA (guanine-N(7)-)-methyltransferase (233 aa).

The segment at 1 to 21 (MTEESHPLRGAGNFFGRRHGK) is disordered. Positions 64, 89, 116, and 138 each coordinate S-adenosyl-L-methionine. Residue aspartate 138 is part of the active site. Substrate contacts are provided by residues lysine 142, aspartate 174, and 212 to 215 (TRYE).

It belongs to the class I-like SAM-binding methyltransferase superfamily. TrmB family.

The catalysed reaction is guanosine(46) in tRNA + S-adenosyl-L-methionine = N(7)-methylguanosine(46) in tRNA + S-adenosyl-L-homocysteine. The protein operates within tRNA modification; N(7)-methylguanine-tRNA biosynthesis. Catalyzes the formation of N(7)-methylguanine at position 46 (m7G46) in tRNA. This is tRNA (guanine-N(7)-)-methyltransferase from Brucella anthropi (strain ATCC 49188 / DSM 6882 / CCUG 24695 / JCM 21032 / LMG 3331 / NBRC 15819 / NCTC 12168 / Alc 37) (Ochrobactrum anthropi).